The chain runs to 465 residues: Monogalactosyldiacylglycerol synthase 3, chloroplastic (465 aa).

UDP contacts are provided by residues histidine 86, arginine 255, 365-369, and glutamate 387; that span reads GTIAE.

It belongs to the glycosyltransferase 28 family. In terms of tissue distribution, expressed mainly in roots. Detected in flowers, leaves, stems, siliques and pollen tubes.

The protein resides in the plastid. It localises to the chloroplast outer membrane. The catalysed reaction is a 1,2-diacyl-sn-glycerol + UDP-alpha-D-galactose = a 1,2-diacyl-3-O-(beta-D-galactosyl)-sn-glycerol + UDP + H(+). It carries out the reaction 1,2-di-(9Z,12Z-octadecadienoyl)-sn-glycerol + UDP-alpha-D-galactose = 1,2-di-(9Z,12Z-octadecadienoyl)-3-beta-D-galactosyl-sn-glycerol + UDP + H(+). It catalyses the reaction 1-(9Z-octadecenoyl)-2-hexadecanoyl-sn-glycerol + UDP-alpha-D-galactose = 1-(9Z-octadecenoyl)-2-hexadecanoyl-3-beta-D-galactosyl-sn-glycerol + UDP + H(+). The enzyme catalyses 1,2-di-(9Z-octadecenoyl)-sn-glycerol + UDP-alpha-D-galactose = 1,2-di-(9Z-octadecenoyl)-3-beta-D-galactosyl-sn-glycerol + UDP + H(+). With respect to regulation, inhibited by galvestine-1. Its function is as follows. Involved in the synthesis of monogalactosyldiacylglycerol, the major structural component of photosynthetic membranes and in the chloroplast envelope biogenesis. Can use both prokaryotic (18:1/16:0) or eukaryotic (18:2/18:2) 1,2-diacylglycerol species, but operates with some preference for the eukaryotic one. Plays a minor role in galactolipid synthesis in chloroplasts. Is essential for membrane lipid remodeling in phosphate-starved roots. Acts as the major factor involved in digalactosyldiacylglycerol (DGDG) biosynthesis in phosphate-starved roots. Does not seem to be required for plant growth under nutrient-sufficient conditions. Required for membrane lipid remodeling in plants grown in acidic conditions. This Arabidopsis thaliana (Mouse-ear cress) protein is Monogalactosyldiacylglycerol synthase 3, chloroplastic.